Reading from the N-terminus, the 150-residue chain is MTLIYVPTTLNLIDSFNYSESIYKWGDYFFRHLESRDFYFSNFGFISLFLLLFVIPTITLTTLGCFLFSYLRFTDINKIKIQIYSLLTVFIFIDVFGLVVSVLFGYLLPLAFDSLPFSVNLTREVFLSLAMIVIFANSVIFTLRQKRNID.

3 helical membrane-spanning segments follow: residues 48 to 68, 89 to 109, and 123 to 143; these read LFLL…CFLF, VFIF…YLLP, and REVF…IFTL.

The protein to M.pneumoniae MPN_085 central region.

The protein resides in the cell membrane. This is an uncharacterized protein from Mycoplasma pneumoniae (strain ATCC 29342 / M129 / Subtype 1) (Mycoplasmoides pneumoniae).